The following is a 182-amino-acid chain: GTP cyclohydrolase 1 (182 aa).

Residues Cys73, His76, and Cys144 each coordinate Zn(2+).

This sequence belongs to the GTP cyclohydrolase I family. In terms of assembly, homomer.

The enzyme catalyses GTP + H2O = 7,8-dihydroneopterin 3'-triphosphate + formate + H(+). Its pathway is cofactor biosynthesis; 7,8-dihydroneopterin triphosphate biosynthesis; 7,8-dihydroneopterin triphosphate from GTP: step 1/1. This Hydrogenobaculum sp. (strain Y04AAS1) protein is GTP cyclohydrolase 1.